The chain runs to 352 residues: Holliday junction branch migration complex subunit RuvB (352 aa).

The tract at residues 1-26 is disordered; that stretch reads MIETDKLRAAAPERLISPQPADRQED. Positions 4-193 are large ATPase domain (RuvB-L); that stretch reads TDKLRAAAPE…FGIVSRLEFY (190 aa). ATP contacts are provided by residues Leu32, Arg33, Gly74, Lys77, Thr78, Thr79, 140–142, Arg183, Tyr193, and Arg230; that span reads EDF. Mg(2+) is bound at residue Thr78. A small ATPAse domain (RuvB-S) region spans residues 194-264; that stretch reads TPDELGFIVS…VADAALRMLD (71 aa). The tract at residues 267–352 is head domain (RuvB-H); it reads SLGLDLMDRK…RPGGTDLFGG (86 aa). Residues Arg322 and Arg327 each contribute to the DNA site.

This sequence belongs to the RuvB family. As to quaternary structure, homohexamer. Forms an RuvA(8)-RuvB(12)-Holliday junction (HJ) complex. HJ DNA is sandwiched between 2 RuvA tetramers; dsDNA enters through RuvA and exits via RuvB. An RuvB hexamer assembles on each DNA strand where it exits the tetramer. Each RuvB hexamer is contacted by two RuvA subunits (via domain III) on 2 adjacent RuvB subunits; this complex drives branch migration. In the full resolvosome a probable DNA-RuvA(4)-RuvB(12)-RuvC(2) complex forms which resolves the HJ.

Its subcellular location is the cytoplasm. The catalysed reaction is ATP + H2O = ADP + phosphate + H(+). Functionally, the RuvA-RuvB-RuvC complex processes Holliday junction (HJ) DNA during genetic recombination and DNA repair, while the RuvA-RuvB complex plays an important role in the rescue of blocked DNA replication forks via replication fork reversal (RFR). RuvA specifically binds to HJ cruciform DNA, conferring on it an open structure. The RuvB hexamer acts as an ATP-dependent pump, pulling dsDNA into and through the RuvAB complex. RuvB forms 2 homohexamers on either side of HJ DNA bound by 1 or 2 RuvA tetramers; 4 subunits per hexamer contact DNA at a time. Coordinated motions by a converter formed by DNA-disengaged RuvB subunits stimulates ATP hydrolysis and nucleotide exchange. Immobilization of the converter enables RuvB to convert the ATP-contained energy into a lever motion, pulling 2 nucleotides of DNA out of the RuvA tetramer per ATP hydrolyzed, thus driving DNA branch migration. The RuvB motors rotate together with the DNA substrate, which together with the progressing nucleotide cycle form the mechanistic basis for DNA recombination by continuous HJ branch migration. Branch migration allows RuvC to scan DNA until it finds its consensus sequence, where it cleaves and resolves cruciform DNA. The sequence is that of Holliday junction branch migration complex subunit RuvB from Azoarcus sp. (strain BH72).